The chain runs to 477 residues: Glycogen synthase (477 aa).

Lys-15 contributes to the ADP-alpha-D-glucose binding site.

The protein belongs to the glycosyltransferase 1 family. Bacterial/plant glycogen synthase subfamily.

It carries out the reaction [(1-&gt;4)-alpha-D-glucosyl](n) + ADP-alpha-D-glucose = [(1-&gt;4)-alpha-D-glucosyl](n+1) + ADP + H(+). It functions in the pathway glycan biosynthesis; glycogen biosynthesis. In terms of biological role, synthesizes alpha-1,4-glucan chains using ADP-glucose. In Erwinia tasmaniensis (strain DSM 17950 / CFBP 7177 / CIP 109463 / NCPPB 4357 / Et1/99), this protein is Glycogen synthase.